The primary structure comprises 290 residues: 33 kDa chaperonin (290 aa).

Disulfide bonds link C235–C237 and C268–C271.

This sequence belongs to the HSP33 family. In terms of processing, under oxidizing conditions two disulfide bonds are formed involving the reactive cysteines. Under reducing conditions zinc is bound to the reactive cysteines and the protein is inactive.

It is found in the cytoplasm. In terms of biological role, redox regulated molecular chaperone. Protects both thermally unfolding and oxidatively damaged proteins from irreversible aggregation. Plays an important role in the bacterial defense system toward oxidative stress. The polypeptide is 33 kDa chaperonin (Streptococcus pneumoniae (strain CGSP14)).